The following is a 672-amino-acid chain: APC membrane recruitment protein 2 (672 aa).

Over residues 1 to 21 the composition is skewed to gly residues; sequence METGRSRGGGAAVSERGGGAR. Disordered stretches follow at residues 1–23, 74–360, and 443–560; these read METGRSRGGGAAVSERGGGARAG, TMPS…DPSA, and MLSQ…DALC. A compositionally biased stretch (low complexity) spans 142 to 158; the sequence is GSLASSSVAKSHSFFSL. Ser154 is subject to Phosphoserine. 2 stretches are compositionally biased toward basic and acidic residues: residues 163–175 and 201–210; these read GRSETGKGDHAEA and RGKEEEEKAV. Residues Ser223, Ser227, and Ser244 each carry the phosphoserine modification. The span at 230-254 shows a compositional bias: basic and acidic residues; sequence CVKEEPPRAARRPDSPGQDASRHAA. Residues 255-269 show a composition bias toward low complexity; it reads GEPAGGEQAPASAES. Ser284 is subject to Phosphoserine. The span at 289 to 303 shows a compositional bias: basic and acidic residues; sequence SRGEDAEGHRREEKP. Residues 343–354 are compositionally biased toward low complexity; it reads ASAVPDPSSVDP. Ser356 and Ser359 each carry phosphoserine. The span at 446-457 shows a compositional bias: low complexity; that stretch reads QTEDQGQGTQEG. Basic and acidic residues-rich tracts occupy residues 478–488 and 502–516; these read RCGEAAKDMSS and QQKEEPKHPEKEHQE.

It belongs to the Amer family. As to quaternary structure, interacts with APC.

It localises to the cell membrane. Negative regulator of the canonical Wnt signaling pathway involved in neuroectodermal patterning. Acts by specifically binding phosphatidylinositol 4,5-bisphosphate (PtdIns(4,5)P2), translocating to the cell membrane and interacting with key regulators of the canonical Wnt signaling pathway, such as components of the beta-catenin destruction complex. The protein is APC membrane recruitment protein 2 (Amer2) of Mus musculus (Mouse).